The chain runs to 61 residues: Alpha-conotoxin-like Lp1.6a (61 aa).

The first 21 residues, 1–21, serve as a signal peptide directing secretion; that stretch reads MGMRMMFIIFLFVVLATTVVS. Residues 22–44 constitute a propeptide that is removed on maturation; the sequence is FTSGRASDGRNAPANNKVSDLIR. Q45 is subject to Pyrrolidone carboxylic acid. 2 cysteine pairs are disulfide-bonded: C47–C53 and C48–C60. C60 is subject to Cysteine amide.

It belongs to the conotoxin A superfamily. As to expression, expressed by the venom duct.

It is found in the secreted. Its function is as follows. Alpha-conotoxins act on postsynaptic membranes, they bind to the nicotinic acetylcholine receptors (nAChR) and thus inhibit them. The sequence is that of Alpha-conotoxin-like Lp1.6a from Conus leopardus (Leopard cone).